Here is a 463-residue protein sequence, read N- to C-terminus: Sodium-coupled neutral amino acid transporter 7 (463 aa).

S28 carries the post-translational modification Phosphoserine. Helical transmembrane passes span 56 to 76, 82 to 102, 130 to 150, 179 to 199, 206 to 226, 240 to 260, 283 to 303, 320 to 340, 372 to 392, 396 to 416, and 429 to 449; these read AVFI…PAAF, VAAG…GLVI, LCEI…LIII, FTIS…KEIG, SLSV…YIWP, ASWM…QCHV, AAMV…FLTF, VAVA…YPIL, VLQT…IPDI, ISVI…LCLI, and ASWW…AFIF.

The protein belongs to the amino acid/polyamine transporter 2 family. In terms of assembly, interacts with the mTORC1 complex; this interaction mediates the recruitment of mTORC1 to the lysosome and its subsequent activation.

It is found in the lysosome membrane. The protein localises to the cell projection. The protein resides in the axon. The catalysed reaction is L-asparagine(in) + Na(+)(in) = L-asparagine(out) + Na(+)(out). It carries out the reaction L-glutamine(in) + Na(+)(in) = L-glutamine(out) + Na(+)(out). Symporter that selectively cotransports sodium ions and amino acids, such as L-glutamine and L-asparagine from the lysosome into the cytoplasm and may participates in mTORC1 activation. The transport activity requires an acidic lysosomal lumen. In Rattus norvegicus (Rat), this protein is Sodium-coupled neutral amino acid transporter 7.